A 36-amino-acid chain; its full sequence is Photosystem I reaction center subunit VIII (36 aa).

Residues 8-28 form a helical membrane-spanning segment; that stretch reads SFFVPLVCLVFPAIAMAFLFV.

The protein belongs to the PsaI family.

The protein localises to the plastid. It is found in the chloroplast thylakoid membrane. Functionally, may help in the organization of the PsaL subunit. The chain is Photosystem I reaction center subunit VIII from Chara vulgaris (Common stonewort).